Here is a 105-residue protein sequence, read N- to C-terminus: MAGGGVWVFRNNGVMELEEQATSRKALVHVATSEVIRSTEALERRLGALGWERYYEDRATLQLHRRDGSADLISIPRDFSRFRSTHMYDVVVKNRDHFKVVDLHT.

Belongs to the FPF1 family.

The sequence is that of Flowering-promoting factor 1-like protein 5 from Oryza sativa subsp. japonica (Rice).